A 284-amino-acid polypeptide reads, in one-letter code: Pantothenate synthetase (284 aa).

30 to 37 is an ATP binding site; it reads MGNLHDGH. Catalysis depends on His-37, which acts as the Proton donor. Residue Gln-61 participates in (R)-pantoate binding. Gln-61 is a beta-alanine binding site. ATP is bound at residue 149-152; that stretch reads GEKD. Gln-155 lines the (R)-pantoate pocket. ATP is bound by residues Ile-178 and 186-189; that span reads LSSR.

This sequence belongs to the pantothenate synthetase family. Homodimer.

It localises to the cytoplasm. The catalysed reaction is (R)-pantoate + beta-alanine + ATP = (R)-pantothenate + AMP + diphosphate + H(+). Its pathway is cofactor biosynthesis; (R)-pantothenate biosynthesis; (R)-pantothenate from (R)-pantoate and beta-alanine: step 1/1. Functionally, catalyzes the condensation of pantoate with beta-alanine in an ATP-dependent reaction via a pantoyl-adenylate intermediate. This is Pantothenate synthetase from Salmonella paratyphi A (strain ATCC 9150 / SARB42).